The chain runs to 43 residues: MEGINFSALAPRYGSRPMLSSWSDIGTSSMNGGAFNWGSLWSG.

Residues 1 to 33 (MEGINFSALAPRYGSRPMLSSWSDIGTSSMNGG) constitute a propeptide that is removed on maturation.

The protein belongs to the adenoviridae protein VI family. As to quaternary structure, interacts with hexon protein; this interaction allows nuclear import of hexon trimers and possibly pre-capsid assembly. Interacts (via C-terminal NLS) with importin alpha/beta. Interacts (via PPxY motif) with host NEDD4 ubiquitine ligase; this interaction might play a role in virus intracellular transport during entry. Part of a complex composed of the core-capsid bridging protein, the endosome lysis protein VI and the hexon-linking protein VIII; these interactions bridge the virus core to the capsid. Interacts with peripentonal hexons; this interaction stabilizes the capsid by gluing two peripentonal hexons together and joining them with an adjacent group-of-nine hexon. Protease cofactor: Heterodimer with the viral protease; disulfide-linked. Interacts with the viral protease. Ubiquitinated by Nedd4 following partial capsid disassembly; which might play a role in intracellular virus movement during entry. Post-translationally, protease cofactor: Contains the major nuclear import and export signals. Proteolytically removed during virion maturation. The processing of the C-terminus turns the precursor into a mature viral structural protein and abrogates its ability to promote hexon import and act as a potential chaperone protein.

It is found in the host nucleus. It localises to the host cytoplasm. The protein resides in the virion. Its function is as follows. During virus assembly, promotes hexon trimers nuclear import through nuclear pore complexes via an importin alpha/beta-dependent mechanism. By analogy to herpesviruses capsid assembly, might act as a chaperone to promote the formation of the icosahedral capsid. Structural component of the virion that provides increased stability to the particle shell through its interaction with the core-capsid bridging protein and the hexon-linking protein VIII. Fibers shedding during virus entry into host cell allows the endosome lysis protein to be exposed as a membrane-lytic peptide. Exhibits pH-independent membrane fragmentation activity and probably mediates viral rapid escape from host endosome via organellar membrane lysis. It is not clear if it then remains partially associated with the capsid and involved in the intracellular microtubule-dependent transport of capsid to the nucleus, or if it is lost during endosomal penetration. This chain is Pre-protein VI, found in Bovine adenovirus 2 (BAdV-2).